A 172-amino-acid chain; its full sequence is NADH-quinone oxidoreductase subunit B (172 aa).

Residues cysteine 46, cysteine 47, cysteine 111, and cysteine 141 each coordinate [4Fe-4S] cluster.

Belongs to the complex I 20 kDa subunit family. NDH-1 is composed of 14 different subunits. Subunits NuoB, C, D, E, F, and G constitute the peripheral sector of the complex. [4Fe-4S] cluster serves as cofactor.

Its subcellular location is the cell membrane. The catalysed reaction is a quinone + NADH + 5 H(+)(in) = a quinol + NAD(+) + 4 H(+)(out). In terms of biological role, NDH-1 shuttles electrons from NADH, via FMN and iron-sulfur (Fe-S) centers, to quinones in the respiratory chain. The immediate electron acceptor for the enzyme in this species is believed to be a menaquinone. Couples the redox reaction to proton translocation (for every two electrons transferred, four hydrogen ions are translocated across the cytoplasmic membrane), and thus conserves the redox energy in a proton gradient. This chain is NADH-quinone oxidoreductase subunit B, found in Bacillus mycoides (strain KBAB4) (Bacillus weihenstephanensis).